The sequence spans 494 residues: Nuclear distribution protein PAC1 (494 aa).

In terms of domain architecture, LisH spans 14–46; the sequence is QKNELDKSVLRYLNWNYKQTVRHEHAQDYESVR. Positions 90-123 form a coiled coil; it reads NSIVRLQKKIIELEQNTETLVSQIKDLNTQVSEL. WD repeat units lie at residues 153–192, 196–244, 251–292, 295–334, 347–395, 415–454, and 457–492; these read NVES…IPLA, SHTK…CKFQ, GHEH…SLKT, PHSQ…SVGT, HFIE…LMAH, GHLS…HVWE, and HTGF…SNVF.

The protein belongs to the WD repeat LIS1/nudF family. Self-associates. Interacts with NDL1 and dynein.

It localises to the cytoplasm. It is found in the cytoskeleton. The protein resides in the spindle pole. Its function is as follows. Positively regulates the activity of the minus-end directed microtubule motor protein dynein. Plays a central role in positioning the mitotic spindle at the bud neck during cell division. Targets cytoplasmic dynein to microtubule plus ends, thereby promoting dynein-mediated microtubule sliding along the bud cortex and consequently the movement of the mitotic spindle to the bud neck. This Saccharomyces cerevisiae (strain YJM789) (Baker's yeast) protein is Nuclear distribution protein PAC1.